The primary structure comprises 348 residues: Eukaryotic translation initiation factor 3 subunit F (348 aa).

The 137-residue stretch at 30–166 (VVIQPQAIFS…TRTYISAPVG (137 aa)) folds into the MPN domain. The span at 312 to 327 (STAIGGTGAESGGQRG) shows a compositional bias: gly residues. Positions 312-348 (STAIGGTGAESGGQRGGQRNNRQRGGQQRNQAEELRA) are disordered. Low complexity predominate over residues 328–341 (GQRNNRQRGGQQRN).

This sequence belongs to the eIF-3 subunit F family. In terms of assembly, component of the eukaryotic translation initiation factor 3 (eIF-3) complex.

Its subcellular location is the cytoplasm. In terms of biological role, component of the eukaryotic translation initiation factor 3 (eIF-3) complex, which is involved in protein synthesis of a specialized repertoire of mRNAs and, together with other initiation factors, stimulates binding of mRNA and methionyl-tRNAi to the 40S ribosome. The eIF-3 complex specifically targets and initiates translation of a subset of mRNAs involved in cell proliferation. This Coccidioides immitis (strain RS) (Valley fever fungus) protein is Eukaryotic translation initiation factor 3 subunit F.